The primary structure comprises 209 residues: Lysine-rich arabinogalactan protein 18 (209 aa).

Residues 1 to 21 form the signal peptide; the sequence is MDRNFLLTVTLICIVVAGVGG. Residues 21-185 form a disordered region; the sequence is GQSPISSPTK…PSADDQSGAA (165 aa). The span at 23–79 shows a compositional bias: low complexity; sequence SPISSPTKSPTTPSAPTTSPTKSPAVTSPTTAPAKTPTASASSPVESPKSPAPVSES. Composition is skewed to pro residues over residues 80–95 and 103–119; these read SPPPTPVPESSPPVPA and SSPPVPAPVADSPPAPV. Positions 132 to 145 are enriched in basic residues; the sequence is SKHKKTTKKSKKHQ. Positions 149 to 164 are enriched in pro residues; sequence APAPELLGPPAPPTES. Glycine 183 is lipidated: GPI-anchor amidated glycine. Positions 184–209 are cleaved as a propeptide — removed in mature form; it reads AASTRVLRNVAVGAVATAWAVLVMAF.

The protein belongs to the lysine-rich AGP family. In terms of processing, O-glycosylated on the hydroxyproline residues. Predominantly expressed in flowers, and moderately expressed in roots, stems and young leaves.

The protein localises to the cell membrane. Functionally, proteoglycan that seems to be implicated in diverse developmental roles such as differentiation, cell-cell recognition, embryogenesis and programmed cell death. The polypeptide is Lysine-rich arabinogalactan protein 18 (AGP18) (Arabidopsis thaliana (Mouse-ear cress)).